The primary structure comprises 676 residues: MNKGIIQLLALSLFCISVKAQDPWIIKADKIDPANYYGVTVANGMIGIVSSSEPFQVKNVVLAGAYDMYGRGRVSNFLNSFNLLNMYLLFNGDDWDASKVKNMKQELDMQHASFTTTFDYGDVASIKYTYYSLRQLPFCVLMDVSVTAKKTVNITAASVMQTPDALRDVQNYYNEVDGPTGRISLLTSTAKSPTGKLQLCASNAFIFNEADSLAPRLMHEMLDNNMHSMRFSKELAAGQTYSYSVVGSSITSAHTTDPLNEAERLTIFARLQGRDGLIKAHTKAWAELWKSDIQIDGEPQAQQDVHSMLYHLYSFSREGTAYAPSPMGLSGSGYNGHIFWDSDLWMFPALLVLHPEIAKSLIEYRYERLAAAKQNAFAHSFKGAMYPWESADNGTEETPVGSLSGPFEHHITACVALAAWNYYCVTQDKQWLQEKGWPIISACADFWASRVERNGPGQYDIKNVIAADEWAEGIDNDAFTNAAAKANLQCAALAAKVLNVKADPDWQLVAQNIPILKFPDGVTKEFASYKGGGIKQADVNLLAYPLKTITDPAQVKKDLEFYESRIPNEGTPAMTQAIFTLLYSRLGNGDKAYHFFKDAYEPNLNPPFRVIAETKGGTNPYFATGAGGIIQSLLMGFGGLDITPNGITQVKSTLPSNWKSITITGVGPEKKTYVVK.

A signal peptide spans 1–20 (MNKGIIQLLALSLFCISVKA). The Proton donor role is filled by E469. The active-site Proton acceptor is E613.

Belongs to the glycosyl hydrolase 65 family.

The catalysed reaction is kojibiose + H2O = beta-D-glucose + D-glucose. In terms of biological role, glycosidase that specifically hydrolyzes kojibiose to beta-glucose and glucose. Besides its activity on kojibiose, is also able to act on alpha-1,2-oligoglucans with a higher degree of polymerization. Shows weak activity on nigerose, but is not capable of breaking down trehalose, maltose, isomaltose, sucrose, isomaltulose, turanose or melezitose. The sequence is that of Kojibiose hydrolase from Mucilaginibacter mallensis.